Here is a 239-residue protein sequence, read N- to C-terminus: Ribitol-5-phosphate cytidylyltransferase (239 aa).

Residues 7–10 (FAGG) and 80–86 (GETGQMS) contribute to the CTP site.

Belongs to the IspD/TarI cytidylyltransferase family. TarI subfamily.

It carries out the reaction D-ribitol 5-phosphate + CTP + H(+) = CDP-L-ribitol + diphosphate. It participates in cell wall biogenesis; poly(ribitol phosphate) teichoic acid biosynthesis. Functionally, catalyzes the transfer of the cytidylyl group of CTP to D-ribitol 5-phosphate. In Streptococcus agalactiae serotype III (strain NEM316), this protein is Ribitol-5-phosphate cytidylyltransferase.